Consider the following 1611-residue polypeptide: DNA (cytosine-5)-methyltransferase 1 (1611 aa).

The tract at residues 1 to 120 (MPARTAPARV…SQTSGEDCRV (120 aa)) is interaction with DMAP1. The interaction with DNMT3A stretch occupies residues 1–148 (MPARTAPARV…RRSKSDGETK (148 aa)). 2 interaction with the PRC2/EED-EZH2 complex regions span residues 1-334 (MPAR…TEKK) and 306-603 (KPQV…TIRQ). Position 15 is a phosphoserine (S15). The region spanning 16 to 109 (RAFSLPDDVR…SREANGCLEN (94 aa)) is the DMAP1-binding domain. Residue K70 is modified to N6,N6-dimethyllysine; by EHMT2. The interval 123–328 (AEKGKPPKPV…EEKRRRTTYR (206 aa)) is disordered. S133 carries the phosphoserine modification. Phosphothreonine is present on T137. Position 141 is a phosphoserine (S141). The residue at position 142 (K142) is an N6-methyllysine; by SETD7. Phosphoserine; by PKB/AKT1 is present on S143. The interaction with DNMT3B stretch occupies residues 149–216 (SEVSSSPRIT…TSRERVAGLL (68 aa)). Residues S152 and S154 each carry the phosphoserine modification. At K160 the chain carries N6-acetyllysine. An interaction with PCNA region spans residues 163 to 174 (RQTTITSHFPRG). Residues 163–174 (RQTTITSHFPRG) show a composition bias toward low complexity. A Phosphothreonine modification is found at T166. Positions 177-204 (KRKPEEEPEKVKSDDSVDEEKDQEEKRR) match the Nuclear localization signal motif. Composition is skewed to basic and acidic residues over residues 178–191 (RKPEEEPEKVKSDD), 199–212 (QEEKRRRVTSRERV), 220–265 (EPGR…RDVR), 279–311 (KDEKRHRSQPKDLASKRRPEEKEPERVKPQVSD), and 319–328 (EEKRRRTTYR). At K188 the chain carries N6-acetyllysine. K257 is subject to N6-acetyllysine; alternate. K257 participates in a covalent cross-link: Glycyl lysine isopeptide (Lys-Gly) (interchain with G-Cter in SUMO2); alternate. S310 is modified (phosphoserine). A DNA replication foci-targeting sequence region spans residues 329-548 (ELTEKKMTRT…NLNRFTEDSL (220 aa)). Residues C351 and C354 each contribute to the Zn(2+) site. S392 and S396 each carry phosphoserine. Zn(2+) contacts are provided by C412 and H416. Residues S507 and S547 each carry the phosphoserine modification. Positions 594-614 (RAERRQTIRQPAKEKDKGPTK) are disordered. The CXXC-type zinc-finger motif lies at 643-689 (NAFKRRRCGVCEICQQPECGKCKACKDMVKFGGSGRSKQACQKRRCP). Residues C650, C653, C656, C661, C664, C667, C683, and C688 each contribute to the Zn(2+) site. The autoinhibitory linker stretch occupies residues 690–751 (NMAMKEADDD…SYYKKVCIDS (62 aa)). A disordered region spans residues 695-726 (EADDDEEVDDNIPEMPSPKKMHQGKKKKQNKN). A compositionally biased stretch (acidic residues) spans 696–706 (ADDDEEVDDNI). Position 711 is a phosphoserine (S711). Basic residues predominate over residues 713-725 (KKMHQGKKKKQNK). S729 carries the post-translational modification Phosphoserine. K746 is modified (N6-acetyllysine). The 126-residue stretch at 752 to 877 (ETLEVGDCVS…QDYARFESPP (126 aa)) folds into the BAH 1 domain. S875 bears the Phosphoserine mark. 5 positions are modified to N6-acetyllysine: K888, K954, K958, K972, and K1051. Residues 969–1097 (HYRKYSDYIK…AKSKSFEDPP (129 aa)) enclose the BAH 2 domain. The interval 1091-1126 (KSFEDPPNHARSTGNKGKGKGKGKNRTKSQTCEPSE) is disordered. 4 repeat units span residues 1106–1107 (KG), 1108–1109 (KG), 1110–1111 (KG), and 1112–1113 (KG). The interval 1106 to 1115 (KGKGKGKGKN) is 5 X 2 AA tandem repeats of K-G. The span at 1107 to 1117 (GKGKGKGKNRT) shows a compositional bias: basic residues. 5 positions are modified to N6-acetyllysine: K1108, K1110, K1112, K1114, and K1118. One copy of the 5; approximate repeat lies at 1114 to 1115 (KN). Residues 1118-1611 (KSQTCEPSEL…AKIKEEAAKD (494 aa)) form an interaction with the PRC2/EED-EZH2 complex region. Positions 1136–1595 (LRTLDVFSGC…LEIKRCMLAK (460 aa)) constitute an SAM-dependent MTase C5-type domain. Positions 1136–1611 (LRTLDVFSGC…AKIKEEAAKD (476 aa)) are catalytic. Residues S1143, 1147–1148 (GL), 1165–1166 (EM), 1187–1188 (DC), and C1188 contribute to the S-adenosyl-L-methionine site. The active site involves C1223. N6-acetyllysine is present on residues K1346 and K1412. Positions 1574 and 1576 each coordinate S-adenosyl-L-methionine. Residue K1605 forms a Glycyl lysine isopeptide (Lys-Gly) (interchain with G-Cter in SUMO2) linkage.

It belongs to the class I-like SAM-binding methyltransferase superfamily. C5-methyltransferase family. Homodimer. Forms a stable complex with E2F1, BB1 and HDAC1. Forms a complex with DMAP1 and HDAC2, with direct interaction. Interacts with the PRC2/EED-EZH2 complex. Probably part of a corepressor complex containing ZNF304, TRIM28, SETDB1 and DNMT1. Interacts with UHRF1; promoting its recruitment to hemimethylated DNA. Interacts with USP7, promoting its deubiquitination. Interacts with PCNA. Interacts with MBD2 and MBD3. Interacts with DNMT3A and DNMT3B. Interacts with UBC9. Interacts with CSNK1D. Interacts with HDAC1. Interacts with BAZ2A/TIP5. Interacts with SIRT7. Interacts with ZNF263; recruited to the SIX3 promoter along with other proteins involved in chromatin modification and transcriptional corepression where it contributes to transcriptional repression. Interacts with L3MBTL3 and DCAF5; the interaction requires DNMT1 methylation at Lys-142 and is necessary to target DNMT1 for ubiquitination by the CRL4-DCAF5 E3 ubiquitin ligase complex and proteasomal degradation. Interacts with PHF20L1; the interaction requires DNMT1 methylation at Lys-142 and protects DNMT1 from ubiquitination and proteasomal degradation. Post-translationally, sumoylated; sumoylation increases activity. Acetylation on multiple lysines, mainly by KAT2B/PCAF, regulates cell cycle G(2)/M transition. Deacetylation of Lys-1346 and Lys-1412 by SIRT1 increases methyltransferase activity. In terms of processing, phosphorylation of Ser-154 by CDKs is important for enzymatic activity and protein stability. Phosphorylation of Ser-143 by AKT1 prevents methylation by SETD7 thereby increasing DNMT1 stability. Post-translationally, methylation at Lys-142 by SETD7 is necessary for the regulation of DNMT1 proteasomal degradation. Ubiquitinated by UHRF1; interaction with USP7 counteracts ubiquitination by UHRF1 by promoting deubiquitination and preventing degradation by the proteasome.

It localises to the nucleus. The enzyme catalyses a 2'-deoxycytidine in DNA + S-adenosyl-L-methionine = a 5-methyl-2'-deoxycytidine in DNA + S-adenosyl-L-homocysteine + H(+). In terms of biological role, methylates CpG residues. Preferentially methylates hemimethylated DNA. Associates with DNA replication sites in S phase maintaining the methylation pattern in the newly synthesized strand, that is essential for epigenetic inheritance. Associates with chromatin during G2 and M phases to maintain DNA methylation independently of replication. It is responsible for maintaining methylation patterns established in development. DNA methylation is coordinated with methylation of histones. Mediates transcriptional repression by direct binding to HDAC2. In association with DNMT3B and via the recruitment of CTCFL/BORIS, involved in activation of BAG1 gene expression by modulating dimethylation of promoter histone H3 at H3K4 and H3K9. Probably forms a corepressor complex required for activated KRAS-mediated promoter hypermethylation and transcriptional silencing of tumor suppressor genes (TSGs) or other tumor-related genes in colorectal cancer (CRC) cells. Also required to maintain a transcriptionally repressive state of genes in undifferentiated embryonic stem cells (ESCs). Associates at promoter regions of tumor suppressor genes (TSGs) leading to their gene silencing. Promotes tumor growth. This Bos taurus (Bovine) protein is DNA (cytosine-5)-methyltransferase 1 (DNMT1).